The sequence spans 274 residues: UPF0173 metal-dependent hydrolase AnaeK_1127 (274 aa).

It belongs to the UPF0173 family.

This chain is UPF0173 metal-dependent hydrolase AnaeK_1127, found in Anaeromyxobacter sp. (strain K).